The primary structure comprises 456 residues: Serine--tRNA ligase (456 aa).

The interval 49–69 (HERNEVSSTIGELKQAGEEEA) is disordered. 241-243 (TAE) lines the L-serine pocket. ATP-binding positions include 272–274 (RQE) and Val-288. Glu-295 contacts L-serine. ATP is bound at residue 368–371 (EVSS). Ser-404 contributes to the L-serine binding site.

It belongs to the class-II aminoacyl-tRNA synthetase family. Type-1 seryl-tRNA synthetase subfamily. In terms of assembly, homodimer. The tRNA molecule binds across the dimer.

The protein localises to the cytoplasm. The enzyme catalyses tRNA(Ser) + L-serine + ATP = L-seryl-tRNA(Ser) + AMP + diphosphate + H(+). The catalysed reaction is tRNA(Sec) + L-serine + ATP = L-seryl-tRNA(Sec) + AMP + diphosphate + H(+). It participates in aminoacyl-tRNA biosynthesis; selenocysteinyl-tRNA(Sec) biosynthesis; L-seryl-tRNA(Sec) from L-serine and tRNA(Sec): step 1/1. Its function is as follows. Catalyzes the attachment of serine to tRNA(Ser). Is also able to aminoacylate tRNA(Sec) with serine, to form the misacylated tRNA L-seryl-tRNA(Sec), which will be further converted into selenocysteinyl-tRNA(Sec). In Halorubrum lacusprofundi (strain ATCC 49239 / DSM 5036 / JCM 8891 / ACAM 34), this protein is Serine--tRNA ligase.